A 231-amino-acid chain; its full sequence is uncharacterized protein (231 aa).

Val-10–Val-34 contributes to the NADP(+) binding site. Substrate is bound at residue Ser-140. Tyr-153 serves as the catalytic Proton acceptor.

The protein belongs to the short-chain dehydrogenases/reductases (SDR) family.

This is an uncharacterized protein from Staphylococcus aureus (strain COL).